Reading from the N-terminus, the 334-residue chain is Ribonucleoside-diphosphate reductase small chain (334 aa).

The Fe cation site is built by Asp77, Glu108, and His111. The active site involves Tyr115. Fe cation-binding residues include Glu171, Glu205, and His208.

This sequence belongs to the ribonucleoside diphosphate reductase small chain family. In terms of assembly, heterotetramer composed of a homodimer of the large subunit (R1) and a homodimer of the small subunit (R2). Larger multisubunit protein complex are also active, composed of (R1)n(R2)n. Fe cation is required as a cofactor.

It carries out the reaction a 2'-deoxyribonucleoside 5'-diphosphate + [thioredoxin]-disulfide + H2O = a ribonucleoside 5'-diphosphate + [thioredoxin]-dithiol. Its function is as follows. Ribonucleoside-diphosphate reductase holoenzyme provides the precursors necessary for viral DNA synthesis. Allows virus growth in non-dividing cells. Catalyzes the biosynthesis of deoxyribonucleotides from the corresponding ribonucleotides. The sequence is that of Ribonucleoside-diphosphate reductase small chain from Ornithodoros (relapsing fever ticks).